Consider the following 506-residue polypeptide: 26S proteasome non-ATPase regulatory subunit 5 (506 aa).

It belongs to the proteasome subunit S5B/HSM3 family. In terms of assembly, interacts with PI31; this interaction is increased by PI31 ADP-ribosylation. Interacts with Rpt2.

Functionally, acts as a chaperone during the assembly of the 26S proteasome. The polypeptide is 26S proteasome non-ATPase regulatory subunit 5 (Drosophila melanogaster (Fruit fly)).